Here is a 729-residue protein sequence, read N- to C-terminus: Elongation factor 2 (729 aa).

In terms of domain architecture, tr-type G spans 19–262 (EQIRNIAIAA…MVCEHFPNPI (244 aa)). GTP contacts are provided by residues 28–35 (AHVDHGKT), 94–98 (DTPGH), and 148–151 (NKVD). Position 597 is a diphthamide (His-597).

It belongs to the TRAFAC class translation factor GTPase superfamily. Classic translation factor GTPase family. EF-G/EF-2 subfamily.

The protein resides in the cytoplasm. Catalyzes the GTP-dependent ribosomal translocation step during translation elongation. During this step, the ribosome changes from the pre-translocational (PRE) to the post-translocational (POST) state as the newly formed A-site-bound peptidyl-tRNA and P-site-bound deacylated tRNA move to the P and E sites, respectively. Catalyzes the coordinated movement of the two tRNA molecules, the mRNA and conformational changes in the ribosome. The chain is Elongation factor 2 from Halomicrobium mukohataei (strain ATCC 700874 / DSM 12286 / JCM 9738 / NCIMB 13541) (Haloarcula mukohataei).